A 195-amino-acid polypeptide reads, in one-letter code: Protein GrpE (195 aa).

Basic and acidic residues predominate over residues 1–14 (MQEPHDQEPIEKQK). A disordered region spans residues 1–45 (MQEPHDQEPIEKQKLPGMDDVLETEHSGTVAGNTERAGEDAAPSL).

Belongs to the GrpE family. In terms of assembly, homodimer.

The protein resides in the cytoplasm. Functionally, participates actively in the response to hyperosmotic and heat shock by preventing the aggregation of stress-denatured proteins, in association with DnaK and GrpE. It is the nucleotide exchange factor for DnaK and may function as a thermosensor. Unfolded proteins bind initially to DnaJ; upon interaction with the DnaJ-bound protein, DnaK hydrolyzes its bound ATP, resulting in the formation of a stable complex. GrpE releases ADP from DnaK; ATP binding to DnaK triggers the release of the substrate protein, thus completing the reaction cycle. Several rounds of ATP-dependent interactions between DnaJ, DnaK and GrpE are required for fully efficient folding. This chain is Protein GrpE, found in Nitrosomonas europaea (strain ATCC 19718 / CIP 103999 / KCTC 2705 / NBRC 14298).